Consider the following 147-residue polypeptide: DNA polymerase III subunit chi (147 aa).

This sequence belongs to the DNA polymerase III chi/HolC chain family. In terms of assembly, the DNA polymerase III holoenzyme complex contains at least 10 different subunits organized into 3 functionally essential subassemblies: the Pol III core, the beta sliding clamp processivity factor and the clamp-loading complex. The Pol III core (subunits alpha, epsilon and theta) contains the polymerase and the 3'-5' exonuclease proofreading activities. The polymerase is tethered to the template via the dimeric beta sliding clamp processivity factor. The clamp-loading complex (also called gamma complex) assembles the beta sliding clamp onto the primed template and plays a central role in the organization and communication at the replication fork. The clamp-loading complex contains delta, delta', psi and chi, and 3 copies of either or both of two different DnaX proteins, gamma and tau. The DNA replisome complex has a single clamp loader (3 tau and 1 each of delta, delta', psi and chi subunits) which binds 3 Pol III cores (1 core on the leading strand and 2 on the lagging strand) each with a beta sliding clamp dimer. Additional proteins in the replisome are other copies of gamma, psi (holD) and chi (this protein), SSB, DNA helicase and RNA primase. The clamp loader hydrolyzes ATP to assemble the beta processivity factor onto the primed template and plays a central role in the organization and communication at the replication fork. The only subunit of the DNA polymerase III holoenzyme known to interact with single-stranded DNA binding protein (SSB). Interacts directly with the psi subunit (holD). Interacts directly with DNA helicase YoaA. It binds to HolD and YoaA, but not both simultaneously.

It catalyses the reaction DNA(n) + a 2'-deoxyribonucleoside 5'-triphosphate = DNA(n+1) + diphosphate. In terms of biological role, part of the beta sliding clamp loading complex, which hydrolyzes ATP to load the beta clamp onto primed DNA to form the DNA replication pre-initiation complex. DNA polymerase III is a complex, multichain enzyme responsible for most of the replicative synthesis in bacteria. This DNA polymerase also exhibits 3' to 5' exonuclease activity. Genetically identified as involved in the repair of replication forks and tolerance of the chain-terminating nucleoside analog 3' AZT. This subunit may stabilize YoaA and/or stimulate the helicase activity of YoaA. The polypeptide is DNA polymerase III subunit chi (Escherichia coli (strain K12)).